The primary structure comprises 376 residues: Actin, cytoplasmic (376 aa).

The protein belongs to the actin family.

Its subcellular location is the cytoplasm. The protein resides in the cytoskeleton. It carries out the reaction ATP + H2O = ADP + phosphate + H(+). In terms of biological role, actins are highly conserved proteins that are involved in various types of cell motility and are ubiquitously expressed in all eukaryotic cells. In Tetrahymena pyriformis, this protein is Actin, cytoplasmic.